The chain runs to 361 residues: Histidinol-phosphate aminotransferase (361 aa).

N6-(pyridoxal phosphate)lysine is present on Lys-219.

This sequence belongs to the class-II pyridoxal-phosphate-dependent aminotransferase family. Histidinol-phosphate aminotransferase subfamily. Homodimer. Pyridoxal 5'-phosphate serves as cofactor.

It carries out the reaction L-histidinol phosphate + 2-oxoglutarate = 3-(imidazol-4-yl)-2-oxopropyl phosphate + L-glutamate. It functions in the pathway amino-acid biosynthesis; L-histidine biosynthesis; L-histidine from 5-phospho-alpha-D-ribose 1-diphosphate: step 7/9. The sequence is that of Histidinol-phosphate aminotransferase from Acinetobacter baumannii (strain AB307-0294).